Consider the following 452-residue polypeptide: UDP-N-acetylmuramoylalanine--D-glutamate ligase (452 aa).

Residue 115–121 (GTNGKTT) participates in ATP binding.

This sequence belongs to the MurCDEF family.

Its subcellular location is the cytoplasm. It catalyses the reaction UDP-N-acetyl-alpha-D-muramoyl-L-alanine + D-glutamate + ATP = UDP-N-acetyl-alpha-D-muramoyl-L-alanyl-D-glutamate + ADP + phosphate + H(+). It functions in the pathway cell wall biogenesis; peptidoglycan biosynthesis. In terms of biological role, cell wall formation. Catalyzes the addition of glutamate to the nucleotide precursor UDP-N-acetylmuramoyl-L-alanine (UMA). The sequence is that of UDP-N-acetylmuramoylalanine--D-glutamate ligase from Elusimicrobium minutum (strain Pei191).